Reading from the N-terminus, the 187-residue chain is Putative zinc finger protein 833 (187 aa).

6 C2H2-type zinc fingers span residues 10–32 (YKCK…ERTH), 38–60 (YECN…ARIH), 66–88 (YICK…ENTH), 94–116 (CECK…ERIH), 122–144 (YKCK…KSTH), and 150–172 (YECK…EGVH).

The protein is Putative zinc finger protein 833 (ZNF833P) of Homo sapiens (Human).